The following is a 118-amino-acid chain: Ribosome-binding factor A (118 aa).

This sequence belongs to the RbfA family. Monomer. Binds 30S ribosomal subunits, but not 50S ribosomal subunits or 70S ribosomes.

It localises to the cytoplasm. Functionally, one of several proteins that assist in the late maturation steps of the functional core of the 30S ribosomal subunit. Associates with free 30S ribosomal subunits (but not with 30S subunits that are part of 70S ribosomes or polysomes). Required for efficient processing of 16S rRNA. May interact with the 5'-terminal helix region of 16S rRNA. In Geobacter sulfurreducens (strain ATCC 51573 / DSM 12127 / PCA), this protein is Ribosome-binding factor A.